A 492-amino-acid chain; its full sequence is Poly(3-hydroxyalkanoate) polymerase subunit PhaC (492 aa).

Residues 70–336 (PILIVYALIN…VIEGATGHIG (267 aa)) form the AB hydrolase-1 domain. Residues cysteine 150, aspartate 305, and histidine 334 each act as charge relay system in the active site. Positions 359–443 (SETGTDETPD…EELESIDGIG (85 aa)) are disordered. Acidic residues-rich tracts occupy residues 362–371 (GTDETPDSET) and 379–388 (QAEETDETPD).

It belongs to the PHA/PHB synthase family. As to quaternary structure, heterodimer with PhaE.

It functions in the pathway biopolymer metabolism; poly-(R)-3-hydroxybutanoate biosynthesis. Its function is as follows. Involved in the production of polyhydroxyalkonic acids (PHAs), which are water-insoluble biopolymers used as intracellular energy reserve material when cells grow under conditions of nutrient limitation. PHAs are composed primarily of 3-hydroxybutyric acid (3HB) and 3-hydroxyvaleric acid (3HV). Required for the production of poly-beta-hydroxybutyrate (PHB) and poly(beta-hydroxybutyrate-co-beta-hydroxyvalerate) (PHBV). The chain is Poly(3-hydroxyalkanoate) polymerase subunit PhaC (phaC) from Haloferax mediterranei (strain ATCC 33500 / DSM 1411 / JCM 8866 / NBRC 14739 / NCIMB 2177 / R-4) (Halobacterium mediterranei).